A 548-amino-acid chain; its full sequence is Myrosinase (548 aa).

The signal sequence occupies residues 1–20 (MKLLHGLALVFLLAAASCKA). 3 disulfides stabilise this stretch: cysteine 26–cysteine 458, cysteine 34–cysteine 454, and cysteine 226–cysteine 236. Glutamine 59 is a binding site for substrate. The Zn(2+) site is built by histidine 76 and aspartate 90. Asparagine 110 is a glycosylation site (N-linked (GlcNAc...) asparagine). Positions 161 and 206 each coordinate substrate. Residue glutamine 207 coordinates L-ascorbate. Asparagine 240 is a glycosylation site (N-linked (GlcNAc...) asparagine). Arginine 281 provides a ligand contact to L-ascorbate. Residue asparagine 331 is glycosylated (N-linked (GlcNAc...) asparagine). Tyrosine 352 is a binding site for substrate. Catalysis depends on glutamate 429, which acts as the Nucleophile. Residues tryptophan 477 and 484–485 (EF) each bind substrate. An N-linked (GlcNAc...) asparagine glycan is attached at asparagine 520.

This sequence belongs to the glycosyl hydrolase 1 family. In terms of assembly, homodimer. In terms of tissue distribution, in vacuoles called myrosin grains of a certain class of cells, myrosin cells, distributed in the cotyledons and the axis of the embryo as well as in different organs of the growing plant.

The protein localises to the vacuole. The enzyme catalyses a thioglucoside + H2O = a sugar + a thiol.. Functionally, degradation of glucosinolates (glucose residue linked by a thioglucoside bound to an amino acid derivative) to glucose, sulfate and any of the products: thiocyanates, isothiocyanates, nitriles, epithionitriles or oxazolidine-2-thiones. The sequence is that of Myrosinase from Brassica napus (Rape).